A 421-amino-acid polypeptide reads, in one-letter code: Serine hydroxymethyltransferase (421 aa).

Residues leucine 121 and 125 to 127 (GHL) contribute to the (6S)-5,6,7,8-tetrahydrofolate site. At lysine 229 the chain carries N6-(pyridoxal phosphate)lysine.

This sequence belongs to the SHMT family. In terms of assembly, homodimer. Pyridoxal 5'-phosphate serves as cofactor.

Its subcellular location is the cytoplasm. The enzyme catalyses (6R)-5,10-methylene-5,6,7,8-tetrahydrofolate + glycine + H2O = (6S)-5,6,7,8-tetrahydrofolate + L-serine. Its pathway is one-carbon metabolism; tetrahydrofolate interconversion. It participates in amino-acid biosynthesis; glycine biosynthesis; glycine from L-serine: step 1/1. Its function is as follows. Catalyzes the reversible interconversion of serine and glycine with tetrahydrofolate (THF) serving as the one-carbon carrier. This reaction serves as the major source of one-carbon groups required for the biosynthesis of purines, thymidylate, methionine, and other important biomolecules. Also exhibits THF-independent aldolase activity toward beta-hydroxyamino acids, producing glycine and aldehydes, via a retro-aldol mechanism. The protein is Serine hydroxymethyltransferase of Haemophilus influenzae (strain 86-028NP).